The sequence spans 282 residues: DegV domain-containing protein spr1415 (282 aa).

Residues 3 to 280 enclose the DegV domain; sequence LAVFTDSSAY…AGSIALGYIP (278 aa). Hexadecanoate contacts are provided by T61 and S94.

In terms of biological role, may bind long-chain fatty acids, such as palmitate, and may play a role in lipid transport or fatty acid metabolism. The sequence is that of DegV domain-containing protein spr1415 from Streptococcus pneumoniae (strain ATCC BAA-255 / R6).